A 156-amino-acid polypeptide reads, in one-letter code: ATP synthase subunit b (156 aa).

The chain crosses the membrane as a helical span at residues 7–29 (LLGQAISFAMFVWFCMKYVWPPI).

This sequence belongs to the ATPase B chain family. F-type ATPases have 2 components, F(1) - the catalytic core - and F(0) - the membrane proton channel. F(1) has five subunits: alpha(3), beta(3), gamma(1), delta(1), epsilon(1). F(0) has three main subunits: a(1), b(2) and c(10-14). The alpha and beta chains form an alternating ring which encloses part of the gamma chain. F(1) is attached to F(0) by a central stalk formed by the gamma and epsilon chains, while a peripheral stalk is formed by the delta and b chains.

Its subcellular location is the cell inner membrane. Its function is as follows. F(1)F(0) ATP synthase produces ATP from ADP in the presence of a proton or sodium gradient. F-type ATPases consist of two structural domains, F(1) containing the extramembraneous catalytic core and F(0) containing the membrane proton channel, linked together by a central stalk and a peripheral stalk. During catalysis, ATP synthesis in the catalytic domain of F(1) is coupled via a rotary mechanism of the central stalk subunits to proton translocation. Functionally, component of the F(0) channel, it forms part of the peripheral stalk, linking F(1) to F(0). The polypeptide is ATP synthase subunit b (Vibrio vulnificus (strain CMCP6)).